The sequence spans 226 residues: 7-cyano-7-deazaguanine synthase (226 aa).

Residue I7–T17 coordinates ATP. Zn(2+) contacts are provided by C187, C195, C198, and C201.

Belongs to the QueC family. Zn(2+) is required as a cofactor.

The catalysed reaction is 7-carboxy-7-deazaguanine + NH4(+) + ATP = 7-cyano-7-deazaguanine + ADP + phosphate + H2O + H(+). It participates in purine metabolism; 7-cyano-7-deazaguanine biosynthesis. In terms of biological role, catalyzes the ATP-dependent conversion of 7-carboxy-7-deazaguanine (CDG) to 7-cyano-7-deazaguanine (preQ(0)). The chain is 7-cyano-7-deazaguanine synthase from Chlorobium limicola (strain DSM 245 / NBRC 103803 / 6330).